The primary structure comprises 78 residues: Acyl carrier protein (78 aa).

A Carrier domain is found at 1–76 (MSLEERVKEI…DVINYLKEKV (76 aa)). Position 36 is an O-(pantetheine 4'-phosphoryl)serine (Ser36).

Belongs to the acyl carrier protein (ACP) family. Post-translationally, 4'-phosphopantetheine is transferred from CoA to a specific serine of apo-ACP by AcpS. This modification is essential for activity because fatty acids are bound in thioester linkage to the sulfhydryl of the prosthetic group.

Its subcellular location is the cytoplasm. It functions in the pathway lipid metabolism; fatty acid biosynthesis. Functionally, carrier of the growing fatty acid chain in fatty acid biosynthesis. The polypeptide is Acyl carrier protein (Aquifex aeolicus (strain VF5)).